Here is a 338-residue protein sequence, read N- to C-terminus: Heat-inducible transcription repressor HrcA (338 aa).

It belongs to the HrcA family.

In terms of biological role, negative regulator of class I heat shock genes (grpE-dnaK-dnaJ and groELS operons). Prevents heat-shock induction of these operons. This Thermotoga maritima (strain ATCC 43589 / DSM 3109 / JCM 10099 / NBRC 100826 / MSB8) protein is Heat-inducible transcription repressor HrcA.